The following is a 188-amino-acid chain: Pterocarpan synthase 1 (188 aa).

A signal peptide spans 1–23 (MAKSTTFFISLTLPFLLLSVVTA). Asparagine 127 is a glycosylation site (N-linked (GlcNAc...) asparagine).

Belongs to the plant dirigent protein family. Homodimer.

The protein resides in the secreted. The protein localises to the extracellular space. It is found in the apoplast. The enzyme catalyses a (4R)-4,2'-dihydroxyisoflavan = a pterocarpan + H2O.. It catalyses the reaction (3R,4R)-7,2'-dihydroxy-4'-methoxyisoflavanol = (-)-medicarpin + H2O. The catalysed reaction is (3S,4R)-7,2'-dihydroxy-4'-methoxyisoflavanol = (+)-medicarpin + H2O. It carries out the reaction (3R,4R)-3-(6-hydroxy-1,3-benzodioxol-5-yl)-3,4-dihydro-2H-chromene-4,7-diol = (-)-maackiain + H2O. The enzyme catalyses (3R,4R)-7,2',4'-trihydroxyisoflavanol = (6aR,11aR)-3,9-dihydroxypterocarpan + H2O. In terms of biological role, involved in pterocarpan phytoalexin biosynthesis. Catalyzes the last step in the biosynthesis of the phytoalexin medicarpin, and thereby contributes to plant defense reactions. Dirigent proteins impart stereoselectivity on the phenoxy radical-coupling reaction, yielding optically active lignans from two molecules of coniferyl alcohol in the biosynthesis of lignans, flavonolignans, and alkaloids and thus plays a central role in plant secondary metabolism. In Glycyrrhiza echinata (Licorice), this protein is Pterocarpan synthase 1.